A 31-amino-acid polypeptide reads, in one-letter code: Acetyl-CoA carboxylase (31 aa).

Positions 1 to 31 (RISSSVIAHKTQLDSGKREVYSSHMQLGGPK) are disordered. Over residues 11 to 21 (TQLDSGKREVY) the composition is skewed to basic and acidic residues.

It catalyses the reaction hydrogencarbonate + acetyl-CoA + ATP = malonyl-CoA + ADP + phosphate + H(+). It participates in lipid metabolism; malonyl-CoA biosynthesis; malonyl-CoA from acetyl-CoA: step 1/1. In Catharanthus roseus (Madagascar periwinkle), this protein is Acetyl-CoA carboxylase.